A 354-amino-acid polypeptide reads, in one-letter code: Ferrochelatase (354 aa).

Residues His-214 and Glu-295 each coordinate Fe cation.

It belongs to the ferrochelatase family.

Its subcellular location is the cytoplasm. The enzyme catalyses heme b + 2 H(+) = protoporphyrin IX + Fe(2+). It participates in porphyrin-containing compound metabolism; protoheme biosynthesis; protoheme from protoporphyrin-IX: step 1/1. Functionally, catalyzes the ferrous insertion into protoporphyrin IX. The protein is Ferrochelatase of Burkholderia ambifaria (strain MC40-6).